A 127-amino-acid polypeptide reads, in one-letter code: Aspartate 1-decarboxylase (127 aa).

Catalysis depends on Ser-25, which acts as the Schiff-base intermediate with substrate; via pyruvic acid. At Ser-25 the chain carries Pyruvic acid (Ser). A substrate-binding site is contributed by Thr-57. Tyr-58 (proton donor) is an active-site residue. 73-75 lines the substrate pocket; that stretch reads GAA.

The protein belongs to the PanD family. In terms of assembly, heterooctamer of four alpha and four beta subunits. It depends on pyruvate as a cofactor. Post-translationally, is synthesized initially as an inactive proenzyme, which is activated by self-cleavage at a specific serine bond to produce a beta-subunit with a hydroxyl group at its C-terminus and an alpha-subunit with a pyruvoyl group at its N-terminus.

The protein localises to the cytoplasm. The enzyme catalyses L-aspartate + H(+) = beta-alanine + CO2. It participates in cofactor biosynthesis; (R)-pantothenate biosynthesis; beta-alanine from L-aspartate: step 1/1. Functionally, catalyzes the pyruvoyl-dependent decarboxylation of aspartate to produce beta-alanine. The chain is Aspartate 1-decarboxylase from Neisseria meningitidis serogroup A / serotype 4A (strain DSM 15465 / Z2491).